The chain runs to 65 residues: Large ribosomal subunit protein bL35 (65 aa).

Over residues 1–26 the composition is skewed to basic residues; the sequence is MPKIKTHRGAAKRFSKTGTGKIKRSH. Residues 1–41 are disordered; sequence MPKIKTHRGAAKRFSKTGTGKIKRSHAFTSHILTSKTRKNK.

It belongs to the bacterial ribosomal protein bL35 family.

In Geotalea daltonii (strain DSM 22248 / JCM 15807 / FRC-32) (Geobacter daltonii), this protein is Large ribosomal subunit protein bL35.